The sequence spans 185 residues: Cell wall protein phiA (185 aa).

The first 18 residues, M1–A18, serve as a signal peptide directing secretion. A glycan (N-linked (GlcNAc...) asparagine) is linked at N60.

Belongs to the phiA family.

Its subcellular location is the secreted. The protein resides in the cell wall. Cell wall protein involved in development of asexual structures such as phialide and conidium development, and thus required for spore formation. Plays a role as a general stress protectant produced by the fungus in competition with antagonistic bacteria. The chain is Cell wall protein phiA from Aspergillus fumigatus (strain CBS 144.89 / FGSC A1163 / CEA10) (Neosartorya fumigata).